The following is a 540-amino-acid chain: [Co(II) methylated amine-specific corrinoid protein] reductase (540 aa).

4Fe-4S ferredoxin-type domains lie at 471 to 500 (IILEVPVEKCVYCKKCVKECPEAALEIVER) and 504 to 535 (RIAKYDSQKCLGTSCRRCVGVCPEDAIDITKL). [4Fe-4S] cluster contacts are provided by C480, C483, C486, C490, C513, C518, C521, and C525.

In terms of assembly, monomer. Requires [4Fe-4S] cluster as cofactor.

The catalysed reaction is 2 Co(II)-[methylamine-specific corrinoid protein] + AH2 + ATP + H2O = 2 Co(I)-[methylamine-specific corrinoid protein] + A + ADP + phosphate + 3 H(+). It catalyses the reaction 2 Co(II)-[dimethylamine-specific corrinoid protein] + AH2 + ATP + H2O = 2 Co(I)-[dimethylamine-specific corrinoid protein] + A + ADP + phosphate + 3 H(+). The enzyme catalyses 2 Co(II)-[trimethylamine-specific corrinoid protein] + AH2 + ATP + H2O = 2 Co(I)-[trimethylamine-specific corrinoid protein] + A + ADP + phosphate + 3 H(+). It participates in one-carbon metabolism; methanogenesis from methylamine. It functions in the pathway one-carbon metabolism; methanogenesis from dimethylamine. Its pathway is one-carbon metabolism; methanogenesis from trimethylamine. In terms of biological role, reductase required for the activation of corrinoid-dependent methylamine methyltransferase reactions during methanogenesis. Mediates the ATP-dependent reduction of corrinoid proteins from the inactive cobalt(II) state to the active cobalt(I) state. Acts on the corrinoid proteins involved in methanogenesis from monomethylamine (MMA), dimethylamine (DMA) and trimethylamine (TMA), namely MtmC, MtbC and MttC, respectively. The protein is [Co(II) methylated amine-specific corrinoid protein] reductase of Methanosarcina barkeri.